The chain runs to 122 residues: Fluoride-specific ion channel FluC (122 aa).

A run of 4 helical transmembrane segments spans residues 4–24 (ILLIGLGGFFGAILRYLVSGI), 36–56 (LIVNLLGSFIIGFLIYSSLFG), 65–85 (FIITGFCGALTTFSTFSYESF), and 100–120 (ILLNVFGCLGMVYLGRLASMF). The Na(+) site is built by G72 and T75.

Belongs to the fluoride channel Fluc/FEX (TC 1.A.43) family.

The protein resides in the cell membrane. The enzyme catalyses fluoride(in) = fluoride(out). Its activity is regulated as follows. Na(+) is not transported, but it plays an essential structural role and its presence is essential for fluoride channel function. Its function is as follows. Fluoride-specific ion channel. Important for reducing fluoride concentration in the cell, thus reducing its toxicity. This is Fluoride-specific ion channel FluC from Methanococcus maripaludis (strain DSM 14266 / JCM 13030 / NBRC 101832 / S2 / LL).